Reading from the N-terminus, the 571-residue chain is Potassium-transporting ATPase potassium-binding subunit (571 aa).

The next 11 membrane-spanning stretches (helical) occupy residues 5–25, 64–84, 136–156, 178–198, 254–274, 285–305, 330–350, 357–379, 421–441, 488–508, and 527–547; these read GWTQ…PLGW, LGYA…LYAI, GLTH…VALI, ILYV…WQGI, LSNF…TNVF, WAIL…AYWA, FDIA…CGAV, FTAL…IGGV, MLGI…ATVL, LAVG…AIAG, and GALF…LTFF.

It belongs to the KdpA family. In terms of assembly, the system is composed of three essential subunits: KdpA, KdpB and KdpC.

The protein localises to the cell inner membrane. Part of the high-affinity ATP-driven potassium transport (or Kdp) system, which catalyzes the hydrolysis of ATP coupled with the electrogenic transport of potassium into the cytoplasm. This subunit binds the periplasmic potassium ions and delivers the ions to the membrane domain of KdpB through an intramembrane tunnel. The polypeptide is Potassium-transporting ATPase potassium-binding subunit (Methylobacterium nodulans (strain LMG 21967 / CNCM I-2342 / ORS 2060)).